Reading from the N-terminus, the 55-residue chain is Spermatid nuclear transition protein 1 (55 aa).

Basic residues predominate over residues Met1–Lys42. Positions Met1–Leu55 are disordered. Phosphoserine occurs at positions 9 and 40.

The protein belongs to the nuclear transition protein 1 family. As to expression, expressed by spermatids (at protein level).

It is found in the nucleus. The protein resides in the chromosome. Plays a key role in the replacement of histones to protamine in the elongating spermatids of mammals. In condensing spermatids, loaded onto the nucleosomes, where it promotes the recruitment and processing of protamines, which are responsible for histone eviction. In Homo sapiens (Human), this protein is Spermatid nuclear transition protein 1 (TNP1).